Consider the following 302-residue polypeptide: Nucleotide-binding protein SERP0433 (302 aa).

Position 18–25 (18–25 (GMSGAGKS)) interacts with ATP. 69 to 72 (DLRG) provides a ligand contact to GTP.

This sequence belongs to the RapZ-like family.

Displays ATPase and GTPase activities. The polypeptide is Nucleotide-binding protein SERP0433 (Staphylococcus epidermidis (strain ATCC 35984 / DSM 28319 / BCRC 17069 / CCUG 31568 / BM 3577 / RP62A)).